The sequence spans 388 residues: Mycinamicin VIII C21 methyl hydroxylase (388 aa).

The heme site is built by His87, Arg91, Arg279, His335, and Cys337.

Belongs to the cytochrome P450 family. Heme is required as a cofactor.

Its pathway is antibiotic biosynthesis; mycinamicin biosynthesis. Its function is as follows. Involved in the biosynthesis of mycinamicin, a 16-membered macrolide antibiotic. Catalyzes hydroxylation at the C21 methyl group of mycinamicin VIII, the earliest macrolide form in the postpolyketide synthase tailoring pathway, leading to mycinamicin VII. Uses ferredoxin MycCII in electron transfer for catalysis. This Micromonospora griseorubida protein is Mycinamicin VIII C21 methyl hydroxylase.